We begin with the raw amino-acid sequence, 1216 residues long: Tyrosine-protein kinase receptor ver-4 (1216 aa).

The Extracellular portion of the chain corresponds to 1-789 (MRVSLTEFLV…VKVAGASSSS (789 aa)). Asparagine 142, asparagine 195, asparagine 206, asparagine 245, asparagine 283, asparagine 333, asparagine 348, asparagine 384, asparagine 402, asparagine 412, asparagine 496, asparagine 508, asparagine 588, asparagine 599, asparagine 664, and asparagine 703 each carry an N-linked (GlcNAc...) asparagine glycan. Ig-like C2-type domains follow at residues 596–691 (KSVN…TSIS) and 697–783 (PPFL…VKVA). Residues cysteine 619 and cysteine 675 are joined by a disulfide bond. Cysteine 721 and cysteine 765 are disulfide-bonded. Residues 790-810 (FFWLFITFFAFVVVGIVVSLL) traverse the membrane as a helical segment. Residues 811–1216 (WKLFGQKDLK…WVQKPTQLFF (406 aa)) lie on the Cytoplasmic side of the membrane. The Protein kinase domain maps to 870-1181 (LEILETLGSG…IKLFKNHIQY (312 aa)). Residues 876–884 (LGSGQFGIV) and lysine 908 contribute to the ATP site. Aspartate 1042 serves as the catalytic Proton acceptor.

This sequence belongs to the protein kinase superfamily. Tyr protein kinase family.

It localises to the cell membrane. It catalyses the reaction L-tyrosyl-[protein] + ATP = O-phospho-L-tyrosyl-[protein] + ADP + H(+). In terms of biological role, receptor tyrosine kinase which may be involved, downstream of pvf-1, in the positioning of ray 1, the most anterior ray sensillum in the male tail. The sequence is that of Tyrosine-protein kinase receptor ver-4 from Caenorhabditis elegans.